Consider the following 449-residue polypeptide: Tubulin beta-7 chain (449 aa).

Gln11, Glu69, Ser138, Gly142, Thr143, Gly144, Asn204, and Asn226 together coordinate GTP. Glu69 contacts Mg(2+). A disordered region spans residues 422 to 449; that stretch reads YQQYQDATADEEGEYEEEEAEYEQEETY. Positions 429-449 are enriched in acidic residues; it reads TADEEGEYEEEEAEYEQEETY.

It belongs to the tubulin family. As to quaternary structure, dimer of alpha and beta chains. A typical microtubule is a hollow water-filled tube with an outer diameter of 25 nm and an inner diameter of 15 nM. Alpha-beta heterodimers associate head-to-tail to form protofilaments running lengthwise along the microtubule wall with the beta-tubulin subunit facing the microtubule plus end conferring a structural polarity. Microtubules usually have 13 protofilaments but different protofilament numbers can be found in some organisms and specialized cells. It depends on Mg(2+) as a cofactor.

The protein localises to the cytoplasm. The protein resides in the cytoskeleton. Functionally, tubulin is the major constituent of microtubules, a cylinder consisting of laterally associated linear protofilaments composed of alpha- and beta-tubulin heterodimers. Microtubules grow by the addition of GTP-tubulin dimers to the microtubule end, where a stabilizing cap forms. Below the cap, tubulin dimers are in GDP-bound state, owing to GTPase activity of alpha-tubulin. This is Tubulin beta-7 chain (TUBB7) from Arabidopsis thaliana (Mouse-ear cress).